A 422-amino-acid chain; its full sequence is Serine/threonine-protein kinase H1 homolog (422 aa).

A disordered region spans residues 35–80; the sequence is FIKYDGGGEKTGSPSPQGQSQAVAKVSQSPPPANDQPEPADSHRKK. The segment covering 46 to 62 has biased composition (polar residues); the sequence is GSPSPQGQSQAVAKVSQ. The Protein kinase domain occupies 96–353; the sequence is YDIKALIGRG…AGQALKHPWI (258 aa). ATP is bound by residues 102–110 and K125; that span reads IGRGSFSRV. D216 functions as the Proton acceptor in the catalytic mechanism. Positions 376-422 are disordered; that stretch reads RASSRCHSTKSSQSTRSSRSTKSSKARRLREKELRELNRRYQQQCNG. Residues 384-396 are compositionally biased toward low complexity; sequence TKSSQSTRSSRST. A compositionally biased stretch (basic and acidic residues) spans 405–414; sequence REKELRELNR.

This sequence belongs to the protein kinase superfamily. CAMK Ser/Thr protein kinase family.

The catalysed reaction is L-seryl-[protein] + ATP = O-phospho-L-seryl-[protein] + ADP + H(+). It carries out the reaction L-threonyl-[protein] + ATP = O-phospho-L-threonyl-[protein] + ADP + H(+). This is Serine/threonine-protein kinase H1 homolog (pskh1) from Danio rerio (Zebrafish).